The chain runs to 378 residues: MKMFQPRRGFSCHLAWFMLQTTLYASWLLGLFPFTFDSRRKQLKRSRWLLLYGFVLHSLAMCLAMSSHLASKQRRKYNAFERNPLLEKIYMQFQVTTFFTISVLLLMNVWKSNTVRKIANELLTLEGQVKDLLTLKNCPNFNCFVIKKHVAAIGQFVISIYFCLCQENSYPKILKILCCLPSVGLQLIIMHFHTEIILVYRYVWLVNETLEDSHHLSSSRIHALASLYDRLLKLSELVVACNDLQLILMLIIYLIGNTVQIFFLIVLGVSMNKRYIYLVASPQLIINFWDFWLNIVVCDLAGKCGDQTSKVLKLFTDLEHDDEELERSLNEFAWLCTHRKFRFQLCGLFSINHNMGFQMIITSFLYLVYLLQFDFMNL.

Topologically, residues 1 to 13 (MKMFQPRRGFSCH) are cytoplasmic. Residues 14–34 (LAWFMLQTTLYASWLLGLFPF) form a helical membrane-spanning segment. At 35–48 (TFDSRRKQLKRSRW) the chain is on the extracellular side. A helical membrane pass occupies residues 49-69 (LLLYGFVLHSLAMCLAMSSHL). The Cytoplasmic portion of the chain corresponds to 70-88 (ASKQRRKYNAFERNPLLEK). A helical membrane pass occupies residues 89-109 (IYMQFQVTTFFTISVLLLMNV). The Extracellular segment spans residues 110-143 (WKSNTVRKIANELLTLEGQVKDLLTLKNCPNFNC). A helical transmembrane segment spans residues 144 to 164 (FVIKKHVAAIGQFVISIYFCL). The Cytoplasmic segment spans residues 165–178 (CQENSYPKILKILC). The helical transmembrane segment at 179 to 199 (CLPSVGLQLIIMHFHTEIILV) threads the bilayer. Residues 200-245 (YRYVWLVNETLEDSHHLSSSRIHALASLYDRLLKLSELVVACNDLQ) are Extracellular-facing. N207 carries an N-linked (GlcNAc...) asparagine glycan. The helical transmembrane segment at 246–266 (LILMLIIYLIGNTVQIFFLIV) threads the bilayer. Over 267–354 (LGVSMNKRYI…LCGLFSINHN (88 aa)) the chain is Cytoplasmic. A helical membrane pass occupies residues 355 to 375 (MGFQMIITSFLYLVYLLQFDF). The Extracellular portion of the chain corresponds to 376–378 (MNL).

The protein belongs to the insect chemoreceptor superfamily. Gustatory receptor (GR) family. Gr22e subfamily. As to expression, taste bristles in the foreleg and labial palps.

Its subcellular location is the cell membrane. Probable gustatory receptor which mediates acceptance or avoidance behavior, depending on its substrates. The polypeptide is Putative gustatory receptor 22f (Gr22f) (Drosophila melanogaster (Fruit fly)).